The following is a 294-amino-acid chain: Taste receptor type 2 member 143 (294 aa).

Topologically, residues 1 to 7 are extracellular; it reads MPSTPTL. The chain crosses the membrane as a helical span at residues 8–28; the sequence is IFIVIFFLVSVASMLQNGFMI. At 29–43 the chain is on the cytoplasmic side; the sequence is IVLGREWMRNRALPA. The chain crosses the membrane as a helical span at residues 44–64; the sequence is VDMIVASLASSRFCLHGIAIL. At 65 to 80 the chain is on the extracellular side; sequence NNFLASFDFCYQANFV. Residues 81–101 form a helical membrane-spanning segment; it reads GILWDFINTLILWLTAWLAIF. Over 102–128 the chain is Cytoplasmic; it reads YCVKISSFSHPVLFWLKWRISQLVPRL. The chain crosses the membrane as a helical span at residues 129–149; the sequence is LLVSLIMGGLSAIISATGNII. At 150-180 the chain is on the extracellular side; it reads ANQMIISQGFHGNCTFGHMSLDFYRYYYLSH. N-linked (GlcNAc...) asparagine glycosylation occurs at Asn162. Residues 181-201 form a helical membrane-spanning segment; that stretch reads AVLMWFTPFFLFLVSIIFLMF. Residues 202 to 227 lie on the Cytoplasmic side of the membrane; sequence SLYRHVEKMRGHRPGPWDPRTQAHTM. The chain crosses the membrane as a helical span at residues 228–248; it reads ALKSLTVFITFYILFFLALII. At 249–260 the chain is on the extracellular side; it reads SSTKSKTMHSYW. The chain crosses the membrane as a helical span at residues 261–281; that stretch reads YWVREIIIYTGIFLNSIILVL. Topologically, residues 282–294 are cytoplasmic; the sequence is SNPKLRKALKMRF.

The protein belongs to the G-protein coupled receptor T2R family.

The protein localises to the membrane. Putative taste receptor which may play a role in the perception of bitterness. The chain is Taste receptor type 2 member 143 from Rattus norvegicus (Rat).